The chain runs to 269 residues: Sulfur carrier protein FdhD (269 aa).

Cysteine 111 acts as the Cysteine persulfide intermediate in catalysis.

It belongs to the FdhD family.

The protein localises to the cytoplasm. Functionally, required for formate dehydrogenase (FDH) activity. Acts as a sulfur carrier protein that transfers sulfur from IscS to the molybdenum cofactor prior to its insertion into FDH. The sequence is that of Sulfur carrier protein FdhD from Brucella melitensis biotype 1 (strain ATCC 23456 / CCUG 17765 / NCTC 10094 / 16M).